We begin with the raw amino-acid sequence, 738 residues long: Nucleoprotein (738 aa).

Positions 334 to 363 (VNVGEQYQQLREAATEAEKQLQQYAETREL) form a coiled coil. Residues 418–640 (GDRYPDDNDI…QGSESEALPI (223 aa)) form a disordered region. Residues 461 to 476 (PYDDESNNYPDYEDSA) are compositionally biased toward acidic residues. Residues 544 to 564 (PGSNTNQPQGNMSSTLQSMTP) show a composition bias toward polar residues. Residues 567-594 (EESEPDDQKDDDDESLTSLDSEGDEDVE) are compositionally biased toward acidic residues. Over residues 616-625 (VDTNQQNGPS) the composition is skewed to polar residues.

Belongs to the filoviruses nucleoprotein family. In terms of assembly, homooligomer. Homomultimerizes to form the nucleocapsid. Binds to viral genomic RNA. Interacts with VP35 and VP30 to form the nucleocapsid. Interacts with host PPP2R5C; this interaction leads to VP30 dephosphorylation and viral transcription. Interacts with VP24; this interaction facilitates nucleocapsid assembly and genome packaging. Interacts with matrix protein VP40; this interaction allows recruitment of the nucleocapsid into progeny virions. Interacts with host STAU1. Interacts with host NXF1 (via RNA-binding domain); this interaction recruits NXF1 to the inclusion bodies were viral replication takes place, probably to export viral mRNA-NXF1 complexes from these sites. Interacts with host CCDC92; this interaction sequesters NP in the host cytoplasm. Interacts with host TRIM14. Phosphorylated and O-glycosylated by host. Acetylated by host EP300 in vitro.

Its subcellular location is the virion. The protein resides in the host cytoplasm. Oligomerizes into helical capsid to encapsidate the viral genome, protecting it from nucleases and the cellular innate immune response. VP35 binds to and stabilizes monomeric NP, keeping it soluble. Upon virus replication, NP is recruited to bind cooperatively viral genomic RNA and VP35 is released. The encapsidated genomic RNA is termed the nucleocapsid and serves as template for transcription and replication. The nucleocapsid is helical with a pitch of 10.81 NP per turn and a diameter of about 22nm. Each NP binds to six nucleotides of viral genomic RNA, three being exposed to the solvant and three hidden into the nucleocapsid. Also recruits host PPP2R5C phosphatase to dephosphorylate VP30 and thereby promote viral transcription. Upon virion assembly and budding, NP binds to VP24 and possibly host STAU1. The protein is Nucleoprotein (NP) of Sudan ebolavirus (strain Human/Uganda/Gulu/2000) (SEBOV).